The chain runs to 389 residues: Capreomycidine synthase (389 aa).

Lysine 230 bears the N6-(pyridoxal phosphate)lysine mark.

It belongs to the class-II pyridoxal-phosphate-dependent aminotransferase family. Requires pyridoxal 5'-phosphate as cofactor.

The catalysed reaction is (2S,3S)-hydroxyarginine = (2S,3R)-capreomycidine + H2O. It participates in antibiotic biosynthesis. Functionally, involved in the biosynthesis of capreomycidine, an unusual amino acid used by non-ribosomal peptide synthases (NRPS) to make the tuberactinomycin class of peptide antibiotic such as viomycin and capreomycin. Catalyzes the dehydration of the C3 hydroxyl of (3S)-hydroxy-(2S)-arginine and the intramolecular cyclization to yield (2S,3R)-capreomycidine. This Streptomyces vinaceus protein is Capreomycidine synthase.